The sequence spans 678 residues: Zinc finger protein 334 (678 aa).

The region spanning 8 to 79 (VSFQDLTVNF…EEFSNQNYPE (72 aa)) is the KRAB domain. C2H2-type zinc fingers lie at residues 235–257 (NEPC…QRIH), 263–285 (YVCN…QRIH), 291–313 (YECS…QKIH), 319–341 (YECN…FRSH), 347–369 (YECK…QRTH), 375–397 (NECK…QRIH), 403–425 (YECS…RRSH), 431–453 (YECS…QITH), 459–481 (YECN…QRTH), 542–564 (YECN…QRTH), 570–592 (YECN…QRTH), 598–620 (YERN…RRIH), 626–648 (YECN…QKIH), and 654–676 (YECN…QKSH).

This sequence belongs to the krueppel C2H2-type zinc-finger protein family.

Its subcellular location is the nucleus. In terms of biological role, may be involved in transcriptional regulation. The protein is Zinc finger protein 334 (ZNF334) of Pongo abelii (Sumatran orangutan).